We begin with the raw amino-acid sequence, 387 residues long: S-adenosylmethionine synthase (387 aa).

Histidine 16 is an ATP binding site. Aspartate 18 is a Mg(2+) binding site. Residue glutamate 44 coordinates K(+). L-methionine-binding residues include glutamate 57 and glutamine 100. Residues 100 to 110 are flexible loop; the sequence is QSPDIAQGVDR. Residues 167–169, 232–233, aspartate 241, 247–248, alanine 264, and lysine 268 each bind ATP; these read DAK, RF, and RK. Position 241 (aspartate 241) interacts with L-methionine. Position 272 (lysine 272) interacts with L-methionine.

It belongs to the AdoMet synthase family. As to quaternary structure, homotetramer; dimer of dimers. Requires Mg(2+) as cofactor. It depends on K(+) as a cofactor.

The protein resides in the cytoplasm. The enzyme catalyses L-methionine + ATP + H2O = S-adenosyl-L-methionine + phosphate + diphosphate. The protein operates within amino-acid biosynthesis; S-adenosyl-L-methionine biosynthesis; S-adenosyl-L-methionine from L-methionine: step 1/1. Functionally, catalyzes the formation of S-adenosylmethionine (AdoMet) from methionine and ATP. The overall synthetic reaction is composed of two sequential steps, AdoMet formation and the subsequent tripolyphosphate hydrolysis which occurs prior to release of AdoMet from the enzyme. This chain is S-adenosylmethionine synthase, found in Cupriavidus pinatubonensis (strain JMP 134 / LMG 1197) (Cupriavidus necator (strain JMP 134)).